The sequence spans 345 residues: Phosphate acyltransferase (345 aa).

This sequence belongs to the PlsX family. In terms of assembly, homodimer. Probably interacts with PlsY.

Its subcellular location is the cytoplasm. The catalysed reaction is a fatty acyl-[ACP] + phosphate = an acyl phosphate + holo-[ACP]. The protein operates within lipid metabolism; phospholipid metabolism. Catalyzes the reversible formation of acyl-phosphate (acyl-PO(4)) from acyl-[acyl-carrier-protein] (acyl-ACP). This enzyme utilizes acyl-ACP as fatty acyl donor, but not acyl-CoA. The sequence is that of Phosphate acyltransferase from Wolbachia sp. subsp. Brugia malayi (strain TRS).